Reading from the N-terminus, the 319-residue chain is MNQLDYIKKFTNVVIDSGNIKYIKKYSPKDVTTNPSLILRESKSKHYYPLLMDAISYAKKKGGNLNSYIINANDKLLVNIGREILKIIDGRISIEIDVRLSFSYLDLIIRAKKIISLYNSYGIENNRILIKIAATWEGIQAAKFLEKSGINCNLTLIFSLVQAIACAESNVYLISPFVGRVNDWYIKNFKLNKNSKIDPGVKLVYKIFYFYQKYGYKTFVMGASFRNIDQIISIIGCDAITISPDFVNKLNNLKLKKIKNFIRVNLESKIKKNKLLEKEFRWKFNQNFMAVEKLSEGIRLFLRDQKKIDSFFLKKFKSG.

Catalysis depends on K131, which acts as the Schiff-base intermediate with substrate.

This sequence belongs to the transaldolase family. Type 1 subfamily. As to quaternary structure, homodimer.

The protein localises to the cytoplasm. It catalyses the reaction D-sedoheptulose 7-phosphate + D-glyceraldehyde 3-phosphate = D-erythrose 4-phosphate + beta-D-fructose 6-phosphate. The protein operates within carbohydrate degradation; pentose phosphate pathway; D-glyceraldehyde 3-phosphate and beta-D-fructose 6-phosphate from D-ribose 5-phosphate and D-xylulose 5-phosphate (non-oxidative stage): step 2/3. In terms of biological role, transaldolase is important for the balance of metabolites in the pentose-phosphate pathway. This chain is Transaldolase, found in Wigglesworthia glossinidia brevipalpis.